Consider the following 89-residue polypeptide: Dynein light chain 1, cytoplasmic (89 aa).

Belongs to the dynein light chain family. In terms of assembly, interacts with spn-F. Forms ternary complexes with spn-F and IKKepsilon. As to expression, ubiquitous.

The protein resides in the cytoplasm. The protein localises to the cytoskeleton. Acts as a non-catalytic accessory component of a dynein complex. This Drosophila melanogaster (Fruit fly) protein is Dynein light chain 1, cytoplasmic (ctp).